The following is a 51-amino-acid chain: Ovomucoid (51 aa).

A Kazal-like domain is found at 3–51 (VDCSGYPKPACTLEYFPLCGSDNQTYANKCTFCNAVVEKNVTLNHLGEC). 3 cysteine pairs are disulfide-bonded: C5–C35, C13–C32, and C21–C51. An N-linked (GlcNAc...) asparagine glycan is attached at N42.

It is found in the secreted. This chain is Ovomucoid, found in Nothoprocta perdicaria (Chilean tinamou).